Here is a 101-residue protein sequence, read N- to C-terminus: STAS-domain containing protein PA14_20770 (101 aa).

In terms of domain architecture, STAS spans 14-101 (LTIQIQGRFD…SNFEQLFKIS (88 aa)).

Phosphorylated on a serine residue, possibly on Ser-56.

Its subcellular location is the secreted. This is STAS-domain containing protein PA14_20770 from Pseudomonas aeruginosa (strain UCBPP-PA14).